We begin with the raw amino-acid sequence, 372 residues long: Probable peptidoglycan glycosyltransferase FtsW (372 aa).

Over 1–12 (MQKKSTISWSYD) the chain is Cytoplasmic. A helical transmembrane segment spans residues 13-33 (AWIVICTLSLLALGLLMVASA). At 34–45 (SMVISDRQFGYP) the chain is on the periplasmic side. Residues 46-66 (FHYFIRHLIYLSLGLTLAWVA) form a helical membrane-spanning segment. Topologically, residues 67 to 77 (SRVPIKVWKTY) are cytoplasmic. Residues 78–98 (SGYLFLVGFLLLILVLAPVIG) form a helical membrane-spanning segment. The Periplasmic portion of the chain corresponds to 99 to 109 (KTVNGSRRWIQ). The helical transmembrane segment at 110-130 (LGFISLQVSEVVKFVTILYLA) threads the bilayer. Over 131-142 (SFLQRYQSEVQK) the chain is Cytoplasmic. A helical transmembrane segment spans residues 143 to 163 (ELKGFLKPMLLVGILSGLLLL). Over 164-165 (EP) the chain is Periplasmic. The helical transmembrane segment at 166–186 (DFGAAVVITMTCLALLFLAGV) threads the bilayer. Residue arginine 187 is a topological domain, cytoplasmic. Residues 188 to 208 (LWPFCVLLVLVAGSLILLAIL) form a helical membrane-spanning segment. Over 209–277 (SPYRLQRLTS…LFAVLAEELG (69 aa)) the chain is Periplasmic. Residues 278 to 298 (LIGEILLMGLFVLLIGRIILI) traverse the membrane as a helical segment. Residues 299-315 (GRRAENSNQLYSAYLAY) lie on the Cytoplasmic side of the membrane. The chain crosses the membrane as a helical span at residues 316 to 336 (GIALWLGLQVIINIGVTAGVL). Over 337–342 (PTKGLT) the chain is Periplasmic. A helical transmembrane segment spans residues 343–363 (LPFISYGGSSLLMNCLAIGVI). Topologically, residues 364–372 (LRIAYETEN) are cytoplasmic.

Belongs to the SEDS family. FtsW subfamily.

Its subcellular location is the cell inner membrane. The enzyme catalyses [GlcNAc-(1-&gt;4)-Mur2Ac(oyl-L-Ala-gamma-D-Glu-L-Lys-D-Ala-D-Ala)](n)-di-trans,octa-cis-undecaprenyl diphosphate + beta-D-GlcNAc-(1-&gt;4)-Mur2Ac(oyl-L-Ala-gamma-D-Glu-L-Lys-D-Ala-D-Ala)-di-trans,octa-cis-undecaprenyl diphosphate = [GlcNAc-(1-&gt;4)-Mur2Ac(oyl-L-Ala-gamma-D-Glu-L-Lys-D-Ala-D-Ala)](n+1)-di-trans,octa-cis-undecaprenyl diphosphate + di-trans,octa-cis-undecaprenyl diphosphate + H(+). Its pathway is cell wall biogenesis; peptidoglycan biosynthesis. Its function is as follows. Peptidoglycan polymerase that is essential for cell division. The polypeptide is Probable peptidoglycan glycosyltransferase FtsW (Coxiella burnetii (strain RSA 493 / Nine Mile phase I)).